Consider the following 363-residue polypeptide: UDP-3-O-acylglucosamine N-acyltransferase (363 aa).

Histidine 252 (proton acceptor) is an active-site residue.

Belongs to the transferase hexapeptide repeat family. LpxD subfamily. As to quaternary structure, homotrimer.

The catalysed reaction is a UDP-3-O-[(3R)-3-hydroxyacyl]-alpha-D-glucosamine + a (3R)-hydroxyacyl-[ACP] = a UDP-2-N,3-O-bis[(3R)-3-hydroxyacyl]-alpha-D-glucosamine + holo-[ACP] + H(+). The protein operates within bacterial outer membrane biogenesis; LPS lipid A biosynthesis. In terms of biological role, catalyzes the N-acylation of UDP-3-O-acylglucosamine using 3-hydroxyacyl-ACP as the acyl donor. Is involved in the biosynthesis of lipid A, a phosphorylated glycolipid that anchors the lipopolysaccharide to the outer membrane of the cell. The polypeptide is UDP-3-O-acylglucosamine N-acyltransferase (Cupriavidus taiwanensis (strain DSM 17343 / BCRC 17206 / CCUG 44338 / CIP 107171 / LMG 19424 / R1) (Ralstonia taiwanensis (strain LMG 19424))).